Reading from the N-terminus, the 179-residue chain is Interleukin-10 (179 aa).

The signal sequence occupies residues 1–19 (MPSSSALLCCLVFLAGVAA). Cystine bridges form between cysteine 31-cysteine 127 and cysteine 81-cysteine 133. Asparagine 135 carries an N-linked (GlcNAc...) asparagine glycan.

Belongs to the IL-10 family. Homodimer. Interacts with IL10RA and IL10RB.

Its subcellular location is the secreted. Major immune regulatory cytokine that acts on many cells of the immune system where it has profound anti-inflammatory functions, limiting excessive tissue disruption caused by inflammation. Mechanistically, IL10 binds to its heterotetrameric receptor comprising IL10RA and IL10RB leading to JAK1 and STAT2-mediated phosphorylation of STAT3. In turn, STAT3 translocates to the nucleus where it drives expression of anti-inflammatory mediators. Targets antigen-presenting cells (APCs) such as macrophages and monocytes and inhibits their release of pro-inflammatory cytokines including granulocyte-macrophage colony-stimulating factor /GM-CSF, granulocyte colony-stimulating factor/G-CSF, IL-1 alpha, IL-1 beta, IL-6, IL-8 and TNF-alpha. Also interferes with antigen presentation by reducing the expression of MHC-class II and co-stimulatory molecules, thereby inhibiting their ability to induce T cell activation. In addition, controls the inflammatory response of macrophages by reprogramming essential metabolic pathways including mTOR signaling. The sequence is that of Interleukin-10 (IL10) from Bubalus carabanensis (Swamp type water buffalo).